The primary structure comprises 106 residues: Protein aveugle (106 aa).

One can recognise an SAM domain in the interval Trp26–Lys91.

Interacts with the SAM domain of cnk.

It localises to the cytoplasm. The protein localises to the membrane. Functionally, required for normal photoreceptor differentiation between Ras and Raf for EGFR signaling in the eye and for mitogen-activated protein kinase phosphorylation. Probably acts together with Cnk to promote Raf activation, perhaps by recruiting an activating kinase. The polypeptide is Protein aveugle (ave) (Drosophila melanogaster (Fruit fly)).